A 138-amino-acid polypeptide reads, in one-letter code: Large ribosomal subunit protein bL19 (138 aa).

It belongs to the bacterial ribosomal protein bL19 family.

This protein is located at the 30S-50S ribosomal subunit interface and may play a role in the structure and function of the aminoacyl-tRNA binding site. The polypeptide is Large ribosomal subunit protein bL19 (rplS) (Rickettsia prowazekii (strain Madrid E)).